Here is a 323-residue protein sequence, read N- to C-terminus: Tyrosine--tRNA ligase (323 aa).

L-tyrosine is bound at residue Y36. A 'HIGH' region motif is present at residues 41 to 49; that stretch reads PSGEIHLGH. L-tyrosine-binding residues include Y158, Q162, D165, and Q180. The 'KMSKS' region motif lies at 214-218; that stretch reads KMSSS. Residue S217 participates in ATP binding.

This sequence belongs to the class-I aminoacyl-tRNA synthetase family. TyrS type 3 subfamily. In terms of assembly, homodimer.

The protein resides in the cytoplasm. It carries out the reaction tRNA(Tyr) + L-tyrosine + ATP = L-tyrosyl-tRNA(Tyr) + AMP + diphosphate + H(+). Functionally, catalyzes the attachment of tyrosine to tRNA(Tyr) in a two-step reaction: tyrosine is first activated by ATP to form Tyr-AMP and then transferred to the acceptor end of tRNA(Tyr). The chain is Tyrosine--tRNA ligase from Archaeoglobus fulgidus (strain ATCC 49558 / DSM 4304 / JCM 9628 / NBRC 100126 / VC-16).